Consider the following 462-residue polypeptide: MTMRSPLTNDHPQPLRASPLSEHDDEIQIRLDDSRYRSFPPPRRVVQRNTPAPIQLQDFEFPKQSHDIPGHYPMIDEIYPDVHPYRTSEDGFVSLTNGDNMAQNKRASRSRPWMQNLQTQDRIQRYKKRRPATKWMKWMNSDWKNHIVAVIGELIGTSLFLFFGYAGIEVAKLQGREPPDLEVLFYISATFGASLMVTAWIFFRISGGLFNPAVTLALAILKAVSPIRAFLLVITQLGASCLAAILVQEIFPKQLDVATTLGSGTSMGQGFVIEAITTAALIFTIIMLAVEKHKATFVAPIGIGLALFVAHMVAVPFTGASLNPARSFGPSAIVWNFPREHWIYWVGPILGAGLAVLFFRLIKLMEYEMANPGQDGDPENDPTQNPELDVAQNAHEREEEVLGLSNGKSWYRDDSSSGSMRRKESVNSFTGGRRSMDRRGDIFRRLDDVEAQWRRQQYRNVV.

The segment covering 1 to 11 (MTMRSPLTNDH) has biased composition (polar residues). The disordered stretch occupies residues 1–24 (MTMRSPLTNDHPQPLRASPLSEHD). The Cytoplasmic portion of the chain corresponds to 1 to 146 (MTMRSPLTND…KWMNSDWKNH (146 aa)). Residues 147 to 167 (IVAVIGELIGTSLFLFFGYAG) form a helical membrane-spanning segment. At 168–182 (IEVAKLQGREPPDLE) the chain is on the extracellular side. The chain crosses the membrane as a helical span at residues 183 to 203 (VLFYISATFGASLMVTAWIFF). Residues 204–229 (RISGGLFNPAVTLALAILKAVSPIRA) lie on the Cytoplasmic side of the membrane. The NPA 1 signature appears at 211–213 (NPA). A helical membrane pass occupies residues 230 to 250 (FLLVITQLGASCLAAILVQEI). The Extracellular portion of the chain corresponds to 251–269 (FPKQLDVATTLGSGTSMGQ). A helical transmembrane segment spans residues 270–290 (GFVIEAITTAALIFTIIMLAV). Over 291-296 (EKHKAT) the chain is Cytoplasmic. The chain crosses the membrane as a helical span at residues 297–317 (FVAPIGIGLALFVAHMVAVPF). Residues 318–341 (TGASLNPARSFGPSAIVWNFPREH) are Extracellular-facing. An NPA 2 motif is present at residues 323–325 (NPA). A helical membrane pass occupies residues 342–362 (WIYWVGPILGAGLAVLFFRLI). Residues 363 to 462 (KLMEYEMANP…WRRQQYRNVV (100 aa)) are Cytoplasmic-facing. The tract at residues 407–433 (GKSWYRDDSSSGSMRRKESVNSFTGGR) is disordered. Basic and acidic residues predominate over residues 410–425 (WYRDDSSSGSMRRKES).

It belongs to the MIP/aquaporin (TC 1.A.8) family.

The protein resides in the membrane. It carries out the reaction H2O(in) = H2O(out). In terms of biological role, water channel required to facilitate the transport of water across membranes. Involved in conidiation. This is Aquaporin-1 from Botryotinia fuckeliana (strain B05.10) (Noble rot fungus).